Reading from the N-terminus, the 297-residue chain is Light-independent protochlorophyllide reductase iron-sulfur ATP-binding protein (297 aa).

ATP contacts are provided by residues 41 to 46 (GIGKST) and Lys70. Ser45 lines the Mg(2+) pocket. The [4Fe-4S] cluster site is built by Cys126 and Cys160. Residues 211–212 (NR) and 235–237 (PDL) each bind ATP.

It belongs to the NifH/BchL/ChlL family. In terms of assembly, homodimer. Protochlorophyllide reductase is composed of three subunits; BchL, BchN and BchB. The cofactor is [4Fe-4S] cluster.

The enzyme catalyses chlorophyllide a + oxidized 2[4Fe-4S]-[ferredoxin] + 2 ADP + 2 phosphate = protochlorophyllide a + reduced 2[4Fe-4S]-[ferredoxin] + 2 ATP + 2 H2O. The protein operates within porphyrin-containing compound metabolism; bacteriochlorophyll biosynthesis (light-independent). Functionally, component of the dark-operative protochlorophyllide reductase (DPOR) that uses Mg-ATP and reduced ferredoxin to reduce ring D of protochlorophyllide (Pchlide) to form chlorophyllide a (Chlide). This reaction is light-independent. The L component serves as a unique electron donor to the NB-component of the complex, and binds Mg-ATP. The sequence is that of Light-independent protochlorophyllide reductase iron-sulfur ATP-binding protein from Cereibacter sphaeroides (strain KD131 / KCTC 12085) (Rhodobacter sphaeroides).